We begin with the raw amino-acid sequence, 127 residues long: Fluoride-specific ion channel FluC (127 aa).

4 consecutive transmembrane segments (helical) span residues 4 to 24, 35 to 55, 71 to 91, and 103 to 123; these read LLLA…LLSM, LGTL…FAWF, TGFC…VFLL, and VFVN…LFSA. Na(+) contacts are provided by Gly75 and Thr78.

Belongs to the fluoride channel Fluc/FEX (TC 1.A.43) family.

Its subcellular location is the cell inner membrane. It carries out the reaction fluoride(in) = fluoride(out). Na(+) is not transported, but it plays an essential structural role and its presence is essential for fluoride channel function. Its function is as follows. Fluoride-specific ion channel. Important for reducing fluoride concentration in the cell, thus reducing its toxicity. The polypeptide is Fluoride-specific ion channel FluC (Escherichia coli O17:K52:H18 (strain UMN026 / ExPEC)).